A 1040-amino-acid polypeptide reads, in one-letter code: Contactin-2 (1040 aa).

A signal peptide spans 1–30; the sequence is MGAPARKRASLLLLLLATMALVSSPGWSFS. Ig-like C2-type domains lie at 39–130, 135–224, 241–324, 329–413, 419–506, and 511–605; these read PVFE…AVLR, QEFS…SVFS, PSIK…GRII, PEWL…AELA, PDFR…GILS, and TKIT…ATVL. 4 disulfides stabilise this stretch: cysteine 63/cysteine 113, cysteine 157/cysteine 209, cysteine 263/cysteine 308, and cysteine 350/cysteine 397. N-linked (GlcNAc...) asparagine glycosylation is found at asparagine 78, asparagine 200, and asparagine 206. Residues asparagine 463, asparagine 479, asparagine 500, and asparagine 527 are each glycosylated (N-linked (GlcNAc...) asparagine). Fibronectin type-III domains follow at residues 612-710, 715-812, 817-913, and 917-1008; these read PPGG…TKEA, APSG…SAEE, APAK…MKPP, and PPGN…NGGT. An N-linked (GlcNAc...) asparagine glycan is attached at asparagine 777. A Cell attachment site motif is present at residues 796–798; sequence RGD. Asparagine 832, asparagine 920, and asparagine 942 each carry an N-linked (GlcNAc...) asparagine glycan. Residues 897-922 are disordered; sequence GTGPASPSADAMTMKPPPRRPPGNIS. Serine 1014 carries the GPI-anchor amidated serine lipid modification. A propeptide spans 1015 to 1040 (removed in mature form); that stretch reads SAVRPAHPGPVFSCMVILMLAGCQRL.

The protein belongs to the immunoglobulin superfamily. Contactin family.

Its subcellular location is the cell membrane. In conjunction with another transmembrane protein, CNTNAP2, contributes to the organization of axonal domains at nodes of Ranvier by maintaining voltage-gated potassium channels at the juxtaparanodal region. The polypeptide is Contactin-2 (Cntn2) (Mus musculus (Mouse)).